The chain runs to 229 residues: Leucyl/phenylalanyl-tRNA--protein transferase (229 aa).

Belongs to the L/F-transferase family.

The protein resides in the cytoplasm. The catalysed reaction is N-terminal L-lysyl-[protein] + L-leucyl-tRNA(Leu) = N-terminal L-leucyl-L-lysyl-[protein] + tRNA(Leu) + H(+). It catalyses the reaction N-terminal L-arginyl-[protein] + L-leucyl-tRNA(Leu) = N-terminal L-leucyl-L-arginyl-[protein] + tRNA(Leu) + H(+). The enzyme catalyses L-phenylalanyl-tRNA(Phe) + an N-terminal L-alpha-aminoacyl-[protein] = an N-terminal L-phenylalanyl-L-alpha-aminoacyl-[protein] + tRNA(Phe). Its function is as follows. Functions in the N-end rule pathway of protein degradation where it conjugates Leu, Phe and, less efficiently, Met from aminoacyl-tRNAs to the N-termini of proteins containing an N-terminal arginine or lysine. This chain is Leucyl/phenylalanyl-tRNA--protein transferase, found in Pseudomonas syringae pv. syringae (strain B728a).